We begin with the raw amino-acid sequence, 50 residues long: Ribosome-inactivating protein lyophyllin (50 aa).

The enzyme catalyses Endohydrolysis of the N-glycosidic bond at one specific adenosine on the 28S rRNA.. Its function is as follows. N-glycosylase that inhibits protein synthesis by depurinating ribosomal rRNA, and thus acts as a ribosomal inactivating protein (RIP). Has adenine polynucleotide glycosidase activity on the poly(A) substrate A30-ssDNA. Inhibits cell-free translation in rabbit reticulocyte lysate system with an IC(50) of 1 nM. May function in the defense response to pathogens. Displays antifungal activity against C.comatus and P.piricola, but not against R.solani, M.arachidicola and C.gossypii. Inhibits mycelial growth in P.piricola with an IC(50) of 2.5 uM. Has cytotoxic activity against the human cancer cell lines Hela, HepG2, and JAR, with IC(50) of 358.8, 489.8, and 926.9 nM respectively. It also inhibits HIV-1 reverse transcriptase activity (IC(50)=7.9 nM) and disrupts mouse embryonic development. The sequence is that of Ribosome-inactivating protein lyophyllin from Lyophyllum shimeji (Hon-shimeji).